The chain runs to 110 residues: Protein OPG154 (110 aa).

It belongs to the orthopoxvirus OPG154 protein family. Homohexamers, covalently linked. Interacts with OPG144 and OPG153.

The protein resides in the virion. Structural protein involved in the envelopment of mature virion (MV) to form the wrapped virion (WV). The wrapping consists of the addition of Golgi membranes to the mature virion. Participates in mature virion (MV) movement within the infected cell. May play an indirect role in MV-cell fusion. The chain is Protein OPG154 (OPG154) from Homo sapiens (Human).